Consider the following 387-residue polypeptide: Zinc finger protein neuro-d4 (387 aa).

Residues lysine 106, lysine 129, and lysine 133 each participate in a glycyl lysine isopeptide (Lys-Gly) (interchain with G-Cter in SUMO2) cross-link. A C2H2-type zinc finger spans residues 195–218 (YVCDICGKRYKNRPGLSYHYTHTH). PHD-type zinc fingers lie at residues 271–328 (NGYC…CKSC) and 325–375 (CKSC…CLRH). Residues cysteine 274, cysteine 277, cysteine 293, cysteine 296, histidine 301, cysteine 304, cysteine 322, cysteine 325, cysteine 328, cysteine 331, cysteine 343, cysteine 346, histidine 351, cysteine 354, cysteine 369, and cysteine 372 each contribute to the Zn(2+) site.

Belongs to the requiem/DPF family. Component of neuron-specific chromatin remodeling complex (nBAF complex) composed of at least, ARID1A/BAF250A or ARID1B/BAF250B, SMARCD1/BAF60A, SMARCD3/BAF60C, SMARCA2/BRM/BAF190B, SMARCA4/BRG1/BAF190A, SMARCB1/BAF47, SMARCC1/BAF155, SMARCE1/BAF57, SMARCC2/BAF170, DPF1/BAF45B, DPF3/BAF45C, ACTL6B/BAF53B and actin. As to expression, at embryonic stages, predominant expression in the nervous system. Expressed specifically in postmitotic neurons (at protein level).

Its subcellular location is the cytoplasm. The protein resides in the nucleus. In terms of biological role, may have an important role in developing neurons by participating in regulation of cell survival, possibly as a neurospecific transcription factor. Belongs to the neuron-specific chromatin remodeling complex (nBAF complex). During neural development a switch from a stem/progenitor to a postmitotic chromatin remodeling mechanism occurs as neurons exit the cell cycle and become committed to their adult state. The transition from proliferating neural stem/progenitor cells to postmitotic neurons requires a switch in subunit composition of the npBAF and nBAF complexes. As neural progenitors exit mitosis and differentiate into neurons, npBAF complexes which contain ACTL6A/BAF53A and PHF10/BAF45A, are exchanged for homologous alternative ACTL6B/BAF53B and DPF1/BAF45B or DPF3/BAF45C subunits in neuron-specific complexes (nBAF). The npBAF complex is essential for the self-renewal/proliferative capacity of the multipotent neural stem cells. The nBAF complex along with CREST plays a role regulating the activity of genes essential for dendrite growth. This chain is Zinc finger protein neuro-d4, found in Mus musculus (Mouse).